The sequence spans 200 residues: MSNQTNKAQDNQVEEIVEGELLNENGTEATGEASLMDELTQANFRVEELEKALQEAETKVESQKDSVIRAAAEVDNIRRRSAIDVEKAHKFALEKFINELLPVLDNMERALQGTDAEAEATKAIYEGVELTAKSFVSTVEKFGLTQVDPLGDTFNPELHQAIGMQPSADFPANTVMMVMQKGYTLNDRLLRPAMVMVSQG.

Polar residues predominate over residues 1 to 11 (MSNQTNKAQDN). The interval 1 to 29 (MSNQTNKAQDNQVEEIVEGELLNENGTEA) is disordered.

Belongs to the GrpE family. In terms of assembly, homodimer.

It localises to the cytoplasm. Functionally, participates actively in the response to hyperosmotic and heat shock by preventing the aggregation of stress-denatured proteins, in association with DnaK and GrpE. It is the nucleotide exchange factor for DnaK and may function as a thermosensor. Unfolded proteins bind initially to DnaJ; upon interaction with the DnaJ-bound protein, DnaK hydrolyzes its bound ATP, resulting in the formation of a stable complex. GrpE releases ADP from DnaK; ATP binding to DnaK triggers the release of the substrate protein, thus completing the reaction cycle. Several rounds of ATP-dependent interactions between DnaJ, DnaK and GrpE are required for fully efficient folding. In Shewanella halifaxensis (strain HAW-EB4), this protein is Protein GrpE.